A 380-amino-acid chain; its full sequence is MDFNLNDEQELFVAGIRELMASENWEAYFAECDRDSVYPERFVKALADMGIDSLLIPEEHGGLDAGFVTLAAVWMELGRLGAPTYVLYQLPGGFNTFLREGTQEQIDKIMAFRGTGKQMWNSAITEPGAGSDVGSLKTTYTRRNGKIYLNGSKCFITSSAYTPYIVVMARDGASPDKPVYTEWFVDMSKPGIKVTKLEKLGLRMDSCCEITFDDVELDEKDMFGREGNGFNSVKEEFDHERFLVALTNYGTAMCAFEDAARYANQRVQFGEAIGRFQLIQEKFAHMAIKLNSMKNMLYEAAWKADNGTITSGDAAMCKYFCANAAFEVVDSAMQVLGGVGIAGNHRISRFWRDLRVDRVSGGSDEMQILTLGRAVLKQYR.

The protein belongs to the acyl-CoA dehydrogenase family. As to quaternary structure, homotetramer. FAD serves as cofactor.

It is found in the cytoplasm. It carries out the reaction 4-(trimethylamino)butanoyl-CoA + oxidized [electron-transfer flavoprotein] + H(+) = crotonobetainyl-CoA + reduced [electron-transfer flavoprotein]. The protein operates within amine and polyamine metabolism; carnitine metabolism. Functionally, catalyzes the reduction of crotonobetainyl-CoA to gamma-butyrobetainyl-CoA. The sequence is that of Crotonobetainyl-CoA reductase from Shigella flexneri serotype 5b (strain 8401).